Reading from the N-terminus, the 2170-residue chain is ATP-binding cassette sub-family A member 7 (2170 aa).

The chain crosses the membrane as a helical span at residues 22 to 42 (PIQLVVELLWPLFLFFILVAV). The Extracellular portion of the chain corresponds to 43–547 (RHSHPPLEHH…DVFLRVLSRS (505 aa)). Cys75 and Cys222 are joined by a disulfide. Asn309 carries N-linked (GlcNAc...) asparagine glycosylation. 6 helical membrane passes run 548-568 (LPLF…KAVV), 591-611 (LGWF…LVLV), 624-644 (VVVF…SFLL), 653-673 (LAAA…VLCV), 679-699 (LPLG…GFGC), and 733-753 (AFLL…EAVC). The 232-residue stretch at 805-1036 (VSIRGLKKHF…LGCGYYLTLV (232 aa)) folds into the ABC transporter 1 domain. Residue 839–846 (GHNGAGKT) coordinates ATP. A helical membrane pass occupies residues 847–867 (TTLSILSGLFPPSSGSASILG). Residues 1044-1086 (THDLKGDTEDPRREKKSGSEGKTADTVLTRDGPHRSSQVPAPD) are disordered. The segment covering 1045 to 1066 (HDLKGDTEDPRREKKSGSEGKT) has biased composition (basic and acidic residues). The chain crosses the membrane as a helical span at residues 1257 to 1277 (IVLPALFVGLALFFTLIVPPF). At 1278–1562 (GQYPPLQLSP…TLIASSVDVL (285 aa)) the chain is on the extracellular side. A disulfide bridge connects residues Cys1370 and Cys1384. Transmembrane regions (helical) follow at residues 1563-1583 (VSIC…LVLI), 1609-1629 (FLWD…IFLA), 1646-1666 (LLLL…SFFF), 1674-1694 (VVLT…TFVL), 1708-1728 (ILKQ…LIDM), and 1754-1774 (IIGK…LITL). The ABC transporter 2 domain occupies 1818–2050 (LVLRDLTKVY…FGAGHTLTLR (233 aa)). 1852-1859 (GVNGAGKT) contributes to the ATP binding site. The segment at 2129–2170 (QGEEEEGSGQETETREVSTPGLQHPKRVSRFLEDPSSVETVI) is disordered.

It belongs to the ABC transporter superfamily. ABCA family. Post-translationally, N-glycosylated. As to expression, expressed in blood cells. Also detected in brain and ovary tissues (at protein level). Expressed in platelet.

It is found in the cell membrane. It localises to the golgi apparatus membrane. Its subcellular location is the early endosome membrane. The protein localises to the cell projection. The protein resides in the ruffle membrane. It is found in the phagocytic cup. It localises to the cytoplasm. ATP-binding cassette (ABC) transporter that plays a role in lipid homeostasis and macrophage-mediated phagocytosis. Binds APOA1 and may function in apolipoprotein-mediated phospholipid efflux from cells. May also mediate cholesterol efflux. May regulate cellular ceramide homeostasis during keratinocyte differentiation. Involved in lipid raft organization and CD1D localization on thymocytes and antigen-presenting cells, which plays an important role in natural killer T-cell development and activation. Plays a role in phagocytosis of apoptotic cells by macrophages. Macrophage phagocytosis is stimulated by APOA1 or APOA2, probably by stabilization of ABCA7. Also involved in phagocytic clearance of amyloid-beta by microglia cells and macrophages. Further limits amyloid-beta production by playing a role in the regulation of amyloid-beta A4 precursor protein (APP) endocytosis and/or processing. The sequence is that of ATP-binding cassette sub-family A member 7 (Abca7) from Rattus norvegicus (Rat).